A 179-amino-acid chain; its full sequence is Large ribosomal subunit protein uL5 (179 aa).

Belongs to the universal ribosomal protein uL5 family. Part of the 50S ribosomal subunit; part of the 5S rRNA/L5/L18/L25 subcomplex. Contacts the 5S rRNA and the P site tRNA. Forms a bridge to the 30S subunit in the 70S ribosome.

This is one of the proteins that bind and probably mediate the attachment of the 5S RNA into the large ribosomal subunit, where it forms part of the central protuberance. In the 70S ribosome it contacts protein S13 of the 30S subunit (bridge B1b), connecting the 2 subunits; this bridge is implicated in subunit movement. Contacts the P site tRNA; the 5S rRNA and some of its associated proteins might help stabilize positioning of ribosome-bound tRNAs. The polypeptide is Large ribosomal subunit protein uL5 (Alkalilimnicola ehrlichii (strain ATCC BAA-1101 / DSM 17681 / MLHE-1)).